The chain runs to 393 residues: NAD(P)H-quinone oxidoreductase subunit H, chloroplastic (393 aa).

Belongs to the complex I 49 kDa subunit family. NDH is composed of at least 16 different subunits, 5 of which are encoded in the nucleus. Interacts with the chaperonin CNP60B4 subunit.

It is found in the plastid. Its subcellular location is the chloroplast thylakoid membrane. The enzyme catalyses a plastoquinone + NADH + (n+1) H(+)(in) = a plastoquinol + NAD(+) + n H(+)(out). It catalyses the reaction a plastoquinone + NADPH + (n+1) H(+)(in) = a plastoquinol + NADP(+) + n H(+)(out). NDH shuttles electrons from NAD(P)H:plastoquinone, via FMN and iron-sulfur (Fe-S) centers, to quinones in the photosynthetic chain and possibly in a chloroplast respiratory chain. The immediate electron acceptor for the enzyme in this species is believed to be plastoquinone. Couples the redox reaction to proton translocation, and thus conserves the redox energy in a proton gradient. The polypeptide is NAD(P)H-quinone oxidoreductase subunit H, chloroplastic (Arabidopsis thaliana (Mouse-ear cress)).